The chain runs to 244 residues: Uridylate kinase (244 aa).

18–21 (KISG) is an ATP binding site. Residues 26 to 31 (GDQGYG) are involved in allosteric activation by GTP. Position 60 (Gly60) interacts with UMP. Residues Gly61 and Arg65 each contribute to the ATP site. Residues Asp80 and 141 to 148 (TGNPYFTT) each bind UMP. ATP is bound by residues Thr168, Tyr174, and Asp177.

It belongs to the UMP kinase family. Homohexamer.

The protein resides in the cytoplasm. The enzyme catalyses UMP + ATP = UDP + ADP. It participates in pyrimidine metabolism; CTP biosynthesis via de novo pathway; UDP from UMP (UMPK route): step 1/1. Allosterically activated by GTP. Inhibited by UTP. Catalyzes the reversible phosphorylation of UMP to UDP. The chain is Uridylate kinase from Paracoccus denitrificans (strain Pd 1222).